A 495-amino-acid chain; its full sequence is PXA domain protein 1 (495 aa).

The region spanning 1 to 174 (MAKLSSLLNP…KFIIYLSKAI (174 aa)) is the PXA domain. 2 helical membrane passes run 7–27 (LLNP…YSGI) and 235–255 (WFFF…FVAE). Polar residues-rich tracts occupy residues 402–419 (AVSS…QRSF) and 427–436 (DSQTPSENSA). The tract at residues 402–436 (AVSSPTKANTNKSHQRSFSIPKATKDSQTPSENSA) is disordered. Residues 446-466 (AYSQIPVIPFFLPSDKLIMLV) form a helical membrane-spanning segment.

It localises to the endosome membrane. In terms of biological role, required for required for normal vacuolar morphology and for vacuolar protein transport. Also required for endosome-to-Golgi protein transport. This Schizosaccharomyces pombe (strain 972 / ATCC 24843) (Fission yeast) protein is PXA domain protein 1 (pxa1).